The following is an 83-amino-acid chain: Large ribosomal subunit protein bL31B (83 aa).

Belongs to the bacterial ribosomal protein bL31 family. Type B subfamily. In terms of assembly, part of the 50S ribosomal subunit.

In Lactobacillus gasseri (strain ATCC 33323 / DSM 20243 / BCRC 14619 / CIP 102991 / JCM 1131 / KCTC 3163 / NCIMB 11718 / NCTC 13722 / AM63), this protein is Large ribosomal subunit protein bL31B.